The following is a 240-amino-acid chain: Protein Thf1 (240 aa).

Residues 186–222 (KDLDLYRSNLEKVDQLLKVLEDAAEAERKKKEKQAAS) are a coiled coil. Residues 212–240 (ERKKKEKQAASTTPAIEEAPVTTAESSES) form a disordered region.

The protein belongs to the THF1 family.

Its function is as follows. May be involved in photosynthetic membrane biogenesis. The protein is Protein Thf1 of Synechocystis sp. (strain ATCC 27184 / PCC 6803 / Kazusa).